The chain runs to 491 residues: Calcium/calmodulin-dependent protein kinase type II delta 1 chain (491 aa).

In terms of domain architecture, Protein kinase spans tyrosine 13 to isoleucine 271. ATP contacts are provided by residues leucine 19–valine 27 and lysine 42. Aspartate 135 acts as the Proton acceptor in catalysis. Threonine 286 is modified (phosphothreonine). Serine 314 carries the post-translational modification Phosphoserine. The segment at serine 315–glutamate 354 is disordered. The span at proline 328 to aspartate 338 shows a compositional bias: polar residues. Phosphothreonine is present on threonine 350.

This sequence belongs to the protein kinase superfamily. CAMK Ser/Thr protein kinase family. CaMK subfamily. In terms of assembly, CAMK2 is composed of four different chains: alpha, beta, gamma, and delta. The different isoforms assemble into homo- or heteromultimeric holoenzymes composed of 8 to 12 subunits. First detected at the 18-somite stage where expression is restricted to somite boundaries. At 24 hpf, expression is elevated in epidermal tissue and in the hatching gland. After 24 hpf, expression dimishes, but persists at low levels along the dorsal trunk. At 48 hpf, expression is restricted at a low level to the forebrain. At 72 hpf, weak expression reappears along the entire dorsal trunk in discrete cell bodies.

It catalyses the reaction L-seryl-[protein] + ATP = O-phospho-L-seryl-[protein] + ADP + H(+). The catalysed reaction is L-threonyl-[protein] + ATP = O-phospho-L-threonyl-[protein] + ADP + H(+). Autophosphorylation of CAMK2 plays an important role in the regulation of the kinase activity. Functionally, caM-kinase II (CAMK2) is a prominent kinase in the central nervous system. This is Calcium/calmodulin-dependent protein kinase type II delta 1 chain from Danio rerio (Zebrafish).